Consider the following 157-residue polypeptide: D-aminoacyl-tRNA deacylase (157 aa).

The short motif at 137 to 138 (GP) is the Gly-cisPro motif, important for rejection of L-amino acids element.

This sequence belongs to the DTD family. In terms of assembly, homodimer.

The protein localises to the cytoplasm. It carries out the reaction glycyl-tRNA(Ala) + H2O = tRNA(Ala) + glycine + H(+). The enzyme catalyses a D-aminoacyl-tRNA + H2O = a tRNA + a D-alpha-amino acid + H(+). Its function is as follows. An aminoacyl-tRNA editing enzyme that deacylates mischarged D-aminoacyl-tRNAs. Also deacylates mischarged glycyl-tRNA(Ala), protecting cells against glycine mischarging by AlaRS. Acts via tRNA-based rather than protein-based catalysis; rejects L-amino acids rather than detecting D-amino acids in the active site. By recycling D-aminoacyl-tRNA to D-amino acids and free tRNA molecules, this enzyme counteracts the toxicity associated with the formation of D-aminoacyl-tRNA entities in vivo and helps enforce protein L-homochirality. This chain is D-aminoacyl-tRNA deacylase, found in Cyanothece sp. (strain PCC 7425 / ATCC 29141).